Here is a 435-residue protein sequence, read N- to C-terminus: Gamma-glutamyl phosphate reductase (435 aa).

The protein belongs to the gamma-glutamyl phosphate reductase family.

The protein localises to the cytoplasm. It carries out the reaction L-glutamate 5-semialdehyde + phosphate + NADP(+) = L-glutamyl 5-phosphate + NADPH + H(+). Its pathway is amino-acid biosynthesis; L-proline biosynthesis; L-glutamate 5-semialdehyde from L-glutamate: step 2/2. Functionally, catalyzes the NADPH-dependent reduction of L-glutamate 5-phosphate into L-glutamate 5-semialdehyde and phosphate. The product spontaneously undergoes cyclization to form 1-pyrroline-5-carboxylate. This chain is Gamma-glutamyl phosphate reductase, found in Synechococcus sp. (strain CC9605).